The chain runs to 373 residues: Spermidine/putrescine import ATP-binding protein PotA (373 aa).

An ABC transporter domain is found at 5–235 (IVFEHVSKKF…PKSSFVADFI (231 aa)). An ATP-binding site is contributed by 37-44 (GPSGCGKT).

Belongs to the ABC transporter superfamily. Spermidine/putrescine importer (TC 3.A.1.11.1) family. In terms of assembly, the complex is composed of two ATP-binding proteins (PotA), two transmembrane proteins (PotB and PotC) and a solute-binding protein (PotD).

The protein localises to the cell inner membrane. The enzyme catalyses ATP + H2O + polyamine-[polyamine-binding protein]Side 1 = ADP + phosphate + polyamineSide 2 + [polyamine-binding protein]Side 1.. In terms of biological role, part of the ABC transporter complex PotABCD involved in spermidine/putrescine import. Responsible for energy coupling to the transport system. The polypeptide is Spermidine/putrescine import ATP-binding protein PotA (Protochlamydia amoebophila (strain UWE25)).